Reading from the N-terminus, the 95-residue chain is Aspartyl/glutamyl-tRNA(Asn/Gln) amidotransferase subunit C (95 aa).

Belongs to the GatC family. In terms of assembly, heterotrimer of A, B and C subunits.

It carries out the reaction L-glutamyl-tRNA(Gln) + L-glutamine + ATP + H2O = L-glutaminyl-tRNA(Gln) + L-glutamate + ADP + phosphate + H(+). The enzyme catalyses L-aspartyl-tRNA(Asn) + L-glutamine + ATP + H2O = L-asparaginyl-tRNA(Asn) + L-glutamate + ADP + phosphate + 2 H(+). Its function is as follows. Allows the formation of correctly charged Asn-tRNA(Asn) or Gln-tRNA(Gln) through the transamidation of misacylated Asp-tRNA(Asn) or Glu-tRNA(Gln) in organisms which lack either or both of asparaginyl-tRNA or glutaminyl-tRNA synthetases. The reaction takes place in the presence of glutamine and ATP through an activated phospho-Asp-tRNA(Asn) or phospho-Glu-tRNA(Gln). This chain is Aspartyl/glutamyl-tRNA(Asn/Gln) amidotransferase subunit C, found in Acetivibrio thermocellus (strain ATCC 27405 / DSM 1237 / JCM 9322 / NBRC 103400 / NCIMB 10682 / NRRL B-4536 / VPI 7372) (Clostridium thermocellum).